The sequence spans 37 residues: Large ribosomal subunit protein bL36 (37 aa).

The protein belongs to the bacterial ribosomal protein bL36 family.

This is Large ribosomal subunit protein bL36 from Clostridium perfringens (strain ATCC 13124 / DSM 756 / JCM 1290 / NCIMB 6125 / NCTC 8237 / Type A).